A 448-amino-acid polypeptide reads, in one-letter code: Ribosomal protein uS12 methylthiotransferase RimO (448 aa).

The MTTase N-terminal domain occupies 13 to 128 (KSFFITTLGC…AGEILRKNFP (116 aa)). The [4Fe-4S] cluster site is built by Cys22, Cys58, Cys91, Cys167, Cys171, and Cys174. A Radical SAM core domain is found at 153–382 (NYSKPYSYVK…AYLGTLKTIH (230 aa)). In terms of domain architecture, TRAM spans 383–448 (QNRIGKIYPC…ELDMSGTWVD (66 aa)).

This sequence belongs to the methylthiotransferase family. RimO subfamily. Requires [4Fe-4S] cluster as cofactor.

Its subcellular location is the cytoplasm. The enzyme catalyses L-aspartate(89)-[ribosomal protein uS12]-hydrogen + (sulfur carrier)-SH + AH2 + 2 S-adenosyl-L-methionine = 3-methylsulfanyl-L-aspartate(89)-[ribosomal protein uS12]-hydrogen + (sulfur carrier)-H + 5'-deoxyadenosine + L-methionine + A + S-adenosyl-L-homocysteine + 2 H(+). Catalyzes the methylthiolation of an aspartic acid residue of ribosomal protein uS12. The sequence is that of Ribosomal protein uS12 methylthiotransferase RimO from Leptospira biflexa serovar Patoc (strain Patoc 1 / Ames).